The sequence spans 409 residues: Putative fatty acyl-CoA reductase 7 (409 aa).

Belongs to the fatty acyl-CoA reductase family.

This chain is Putative fatty acyl-CoA reductase 7 (FAR7), found in Arabidopsis thaliana (Mouse-ear cress).